The sequence spans 688 residues: Translation initiation factor IF-2 (688 aa).

2 stretches are compositionally biased toward basic and acidic residues: residues 53–62 and 86–95; these read GKEKSEKTKE and KRDDKNEKVN. Residues 53–100 are disordered; that stretch reads GKEKSEKTKEEDDEIETTAKNPIKESMNNKKSNKRDDKNEKVNTENAE. One can recognise a tr-type G domain in the interval 187–354; the sequence is KRSPIITVMG…MILLSSEILE (168 aa). A G1 region spans residues 196–203; it reads GHVDHGKT. 196–203 lines the GTP pocket; it reads GHVDHGKT. Positions 221–225 are G2; sequence GITQH. The G3 stretch occupies residues 242–245; it reads DTPG. Residues 242–246 and 296–299 each bind GTP; these read DTPGH and NKID. The tract at residues 296–299 is G4; it reads NKID. Residues 332–334 form a G5 region; that stretch reads SAH.

It belongs to the TRAFAC class translation factor GTPase superfamily. Classic translation factor GTPase family. IF-2 subfamily.

It localises to the cytoplasm. Functionally, one of the essential components for the initiation of protein synthesis. Protects formylmethionyl-tRNA from spontaneous hydrolysis and promotes its binding to the 30S ribosomal subunits. Also involved in the hydrolysis of GTP during the formation of the 70S ribosomal complex. The protein is Translation initiation factor IF-2 of Clostridium botulinum (strain ATCC 19397 / Type A).